A 156-amino-acid chain; its full sequence is ATP synthase subunit b (156 aa).

A helical membrane pass occupies residues 7–29 (LFAQMVVFLVLAWFTMKFVWPPL).

This sequence belongs to the ATPase B chain family. In terms of assembly, F-type ATPases have 2 components, F(1) - the catalytic core - and F(0) - the membrane proton channel. F(1) has five subunits: alpha(3), beta(3), gamma(1), delta(1), epsilon(1). F(0) has three main subunits: a(1), b(2) and c(10-14). The alpha and beta chains form an alternating ring which encloses part of the gamma chain. F(1) is attached to F(0) by a central stalk formed by the gamma and epsilon chains, while a peripheral stalk is formed by the delta and b chains.

It is found in the cell inner membrane. In terms of biological role, f(1)F(0) ATP synthase produces ATP from ADP in the presence of a proton or sodium gradient. F-type ATPases consist of two structural domains, F(1) containing the extramembraneous catalytic core and F(0) containing the membrane proton channel, linked together by a central stalk and a peripheral stalk. During catalysis, ATP synthesis in the catalytic domain of F(1) is coupled via a rotary mechanism of the central stalk subunits to proton translocation. Its function is as follows. Component of the F(0) channel, it forms part of the peripheral stalk, linking F(1) to F(0). This chain is ATP synthase subunit b, found in Burkholderia cenocepacia (strain ATCC BAA-245 / DSM 16553 / LMG 16656 / NCTC 13227 / J2315 / CF5610) (Burkholderia cepacia (strain J2315)).